Reading from the N-terminus, the 299-residue chain is Taste receptor type 2 member 19 (299 aa).

Residue Met-1 is a topological domain, extracellular. Residues 2-22 (MCFLLIISSILVVFAFVLGNV) traverse the membrane as a helical segment. Residues 23 to 55 (ANGFIALVNVIDWVNTRKISSAEQILTALVVSR) lie on the Cytoplasmic side of the membrane. Residues 56–76 (IGLLWVMLFLWYATVFNSALY) form a helical membrane-spanning segment. The Extracellular portion of the chain corresponds to 77–87 (GLEVRIVASNA). Residues 88 to 108 (WAVTNHFSMWLAASLSIFCLL) form a helical membrane-spanning segment. The Cytoplasmic segment spans residues 109–127 (KIANFSNLISLHLKKRIKS). A helical membrane pass occupies residues 128–148 (VVLVILLGPLVFLICNLAVIT). At 149–181 (MDERVWTKEYEGNVTWKIKLRNAIHLSSLTVTT) the chain is on the extracellular side. Residue Asn-161 is glycosylated (N-linked (GlcNAc...) asparagine). A helical transmembrane segment spans residues 182-202 (LANLIPFTLSLICFLLLICSL). Residues 203–226 (CKHLKKMRLHSKGSQDPSTKVHIK) are Cytoplasmic-facing. A helical transmembrane segment spans residues 227–247 (ALQTVTSFLMLFAIYFLCIIT). The Extracellular portion of the chain corresponds to 248 to 259 (STWNLRTQQSKL). A helical transmembrane segment spans residues 260–280 (VLLLCQTVAIMYPSFHSFILI). Topologically, residues 281-299 (MGSRKLKQTFLSVLWQMTR) are cytoplasmic.

The protein belongs to the G-protein coupled receptor T2R family. As to expression, expressed in subsets of taste receptor cells of the tongue and exclusively in gustducin-positive cells.

Its subcellular location is the membrane. Receptor that may play a role in the perception of bitterness and is gustducin-linked. May play a role in sensing the chemical composition of the gastrointestinal content. The activity of this receptor may stimulate alpha gustducin, mediate PLC-beta-2 activation and lead to the gating of TRPM5. This Homo sapiens (Human) protein is Taste receptor type 2 member 19 (TAS2R19).